A 471-amino-acid polypeptide reads, in one-letter code: Adenosylhomocysteinase (471 aa).

The substrate site is built by Thr-60, Asp-135, and Glu-196. 197–199 (TTT) lines the NAD(+) pocket. Substrate-binding residues include Lys-226 and Asp-230. Residues Asn-231, 260-265 (GYGDVG), Glu-283, Asn-318, 339-341 (IGH), and Asn-387 each bind NAD(+).

This sequence belongs to the adenosylhomocysteinase family. NAD(+) serves as cofactor.

The protein resides in the cytoplasm. It carries out the reaction S-adenosyl-L-homocysteine + H2O = L-homocysteine + adenosine. Its pathway is amino-acid biosynthesis; L-homocysteine biosynthesis; L-homocysteine from S-adenosyl-L-homocysteine: step 1/1. May play a key role in the regulation of the intracellular concentration of adenosylhomocysteine. The chain is Adenosylhomocysteinase from Chlorobaculum tepidum (strain ATCC 49652 / DSM 12025 / NBRC 103806 / TLS) (Chlorobium tepidum).